The following is a 2036-amino-acid chain: Bikaverin polyketide synthase bik1 (2036 aa).

The segment at 8-242 (YVFGDQSTPV…YPAPIYGPYH (235 aa)) is N-terminal acylcarrier protein transacylase domain (SAT). In terms of domain architecture, Ketosynthase family 3 (KS3) spans 370–801 (ENKIAIIGFS…GGNTSLLLED (432 aa)). Residues Cys-541, His-676, and His-718 each act as for beta-ketoacyl synthase activity in the active site. The tract at residues 908-1209 (FLFTGQGAQE…LASLRRKEDH (302 aa)) is acyl/malonyl transferases. Ser-997 functions as the For acyl/malonyl transferase activity in the catalytic mechanism. The tract at residues 1293 to 1425 (HNVIEQVHGD…CDVAVENPSS (133 aa)) is N-terminal hotdog fold. The region spanning 1293-1600 (HNVIEQVHGD…FKKVARKVLE (308 aa)) is the PKS/mFAS DH domain. Positions 1295–1599 (VIEQVHGDKR…TFKKVARKVL (305 aa)) are product template (PT) domain. Residue His-1325 is the Proton acceptor; for dehydratase activity of the active site. The tract at residues 1452 to 1600 (SAHMMRRGLL…FKKVARKVLE (149 aa)) is C-terminal hotdog fold. Asp-1511 (proton donor; for dehydratase activity) is an active-site residue. Residues 1628–1654 (VLTPPSTTSHSVGTTSPPEPTESPVGS) are disordered. Residues 1638 to 1654 (SVGTTSPPEPTESPVGS) are compositionally biased toward low complexity. The 78-residue stretch at 1653–1730 (GSASGLIQKA…DLKSFLGAND (78 aa)) folds into the Carrier domain. Ser-1690 carries the post-translational modification O-(pantetheine 4'-phosphoryl)serine. The tract at residues 1733–1758 (FSSSNSEAESSASSAASTSPSDHGDD) is disordered. Over residues 1734 to 1753 (SSSNSEAESSASSAASTSPS) the composition is skewed to low complexity. Ser-1857 functions as the For thioesterase activity in the catalytic mechanism.

The protein operates within secondary metabolite biosynthesis. Functionally, polyketide synthase; part of the gene cluster that mediates the biosynthesis of bikaverin, a red pigment also considered as a mycotoxin. The first stage is catalyzed by the polyketide synthase bik1, which catalyzes the formation of the intermediate SMA76a also knowm as pre-bikaverin. FAD-dependent monooxygenase bik2 might then be responsible for the oxidation of pre-bikaverin to oxo-pre-bikaverin which is in turn methylated by the O-methyltransferase bik3 to me-oxo-pre-bikaverin. A further cycle of oxydation and methylation by bik2 and bik3 leads to the final product of bikaverin, via a nor-bikaverin intermediate. This Gibberella fujikuroi (strain CBS 195.34 / IMI 58289 / NRRL A-6831) (Bakanae and foot rot disease fungus) protein is Bikaverin polyketide synthase bik1.